The sequence spans 955 residues: Centrosomal protein of 112 kDa (955 aa).

Residues 277–954 (QKHDADVQKI…QEELTTYQGR (678 aa)) are a coiled coil.

It is found in the cytoplasm. The protein localises to the cytoskeleton. The protein resides in the microtubule organizing center. Its subcellular location is the centrosome. The polypeptide is Centrosomal protein of 112 kDa (CEP112) (Homo sapiens (Human)).